Here is a 210-residue protein sequence, read N- to C-terminus: Na(+)-translocating NADH-quinone reductase subunit D (210 aa).

The next 6 membrane-spanning stretches (helical) occupy residues 14 to 34 (PIVS…ALAV), 42 to 62 (LVMT…ISML), 72 to 92 (IIVQ…VLQA), 103 to 123 (VFVG…AYAM), 131 to 151 (FMDG…VGFV), and 178 to 198 (NGLL…IWII).

It belongs to the NqrDE/RnfAE family. In terms of assembly, composed of six subunits; NqrA, NqrB, NqrC, NqrD, NqrE and NqrF.

The protein resides in the cell inner membrane. The catalysed reaction is a ubiquinone + n Na(+)(in) + NADH + H(+) = a ubiquinol + n Na(+)(out) + NAD(+). Functionally, NQR complex catalyzes the reduction of ubiquinone-1 to ubiquinol by two successive reactions, coupled with the transport of Na(+) ions from the cytoplasm to the periplasm. NqrA to NqrE are probably involved in the second step, the conversion of ubisemiquinone to ubiquinol. This Shewanella woodyi (strain ATCC 51908 / MS32) protein is Na(+)-translocating NADH-quinone reductase subunit D.